We begin with the raw amino-acid sequence, 102 residues long: Co-chaperonin GroES (102 aa).

This sequence belongs to the GroES chaperonin family. In terms of assembly, heptamer of 7 subunits arranged in a ring. Interacts with the chaperonin GroEL.

It localises to the cytoplasm. Together with the chaperonin GroEL, plays an essential role in assisting protein folding. The GroEL-GroES system forms a nano-cage that allows encapsulation of the non-native substrate proteins and provides a physical environment optimized to promote and accelerate protein folding. GroES binds to the apical surface of the GroEL ring, thereby capping the opening of the GroEL channel. The chain is Co-chaperonin GroES from Chlamydia trachomatis serovar D (strain ATCC VR-885 / DSM 19411 / UW-3/Cx).